Reading from the N-terminus, the 267-residue chain is L-aspartate dehydrogenase (267 aa).

2 residues coordinate NAD(+): Ala124 and Asn190. His220 is an active-site residue.

It belongs to the L-aspartate dehydrogenase family.

The enzyme catalyses L-aspartate + NADP(+) + H2O = oxaloacetate + NH4(+) + NADPH + H(+). The catalysed reaction is L-aspartate + NAD(+) + H2O = oxaloacetate + NH4(+) + NADH + H(+). It functions in the pathway cofactor biosynthesis; NAD(+) biosynthesis; iminoaspartate from L-aspartate (dehydrogenase route): step 1/1. In terms of biological role, specifically catalyzes the NAD or NADP-dependent dehydrogenation of L-aspartate to iminoaspartate. The chain is L-aspartate dehydrogenase from Ralstonia pickettii (strain 12J).